The primary structure comprises 241 residues: MKKHIFEDARAIAAFLVSVFDSRLKTQEILWLALSGGSTPREIFRTWAHEFRHHLDWKRLRFFWSDERCVPPTDAQSNFNMTHSALLEPLEINPDAVFRVRGEDAPESACAAYSQEIEARLPRQRGVPCFDIILLGMGADGHTASIFPHEIELWDHSGCCVVATHPDTGQKRVSFTGHLINNAHEIYVVVTGREKQDMLASVASDPHASVPLHAWTLPKRSGCWIPLLRGLYPRKQCKPTV.

Belongs to the glucosamine/galactosamine-6-phosphate isomerase family. 6-phosphogluconolactonase subfamily.

The catalysed reaction is 6-phospho-D-glucono-1,5-lactone + H2O = 6-phospho-D-gluconate + H(+). Its pathway is carbohydrate degradation; pentose phosphate pathway; D-ribulose 5-phosphate from D-glucose 6-phosphate (oxidative stage): step 2/3. Its function is as follows. Hydrolysis of 6-phosphogluconolactone to 6-phosphogluconate. The polypeptide is 6-phosphogluconolactonase (pgl) (Treponema pallidum (strain Nichols)).